A 304-amino-acid polypeptide reads, in one-letter code: MLNKRISNLATILRFIALPRARNIIAPQEYIANSVPVAITRRAARNTFVFSVALTPFVLYSAFHNDSAESDFPELVEVYPGVRPFPAVLGPPELPLQTNYKLLGHGVRAVTFLSFKVYALGIYAAVDDLPLIPRTLSAEYLSTLDTEKVDAPAKEQLYKAMQDHEKSRAVVNDLLGKGLRLVAKITPIRNTDFTHLKDGLVKSILNHPAARHEGETLANGLEELRAAFTRRGSVPKDDDLVLELQATGALQLYHRDAKTGQTTTLGKVTEPLIGRYLFSQYLSGKAPLSKDTKDSVTRKIISMV.

The N-terminal 42 residues, 1-42 (MLNKRISNLATILRFIALPRARNIIAPQEYIANSVPVAITRR), are a transit peptide targeting the mitochondrion.

This sequence belongs to the AIM18/AIM46 family.

Its subcellular location is the mitochondrion. The sequence is that of Altered inheritance of mitochondria protein 18, mitochondrial (AIM18) from Eremothecium gossypii (strain ATCC 10895 / CBS 109.51 / FGSC 9923 / NRRL Y-1056) (Yeast).